We begin with the raw amino-acid sequence, 557 residues long: Aerobic glycerol-3-phosphate dehydrogenase (557 aa).

21–49 (DVVIIGGGITGAGIALDASERGMKVALVE) contacts FAD.

This sequence belongs to the FAD-dependent glycerol-3-phosphate dehydrogenase family. FAD is required as a cofactor.

It is found in the cytoplasm. The catalysed reaction is a quinone + sn-glycerol 3-phosphate = dihydroxyacetone phosphate + a quinol. It functions in the pathway polyol metabolism; glycerol degradation via glycerol kinase pathway; glycerone phosphate from sn-glycerol 3-phosphate (aerobic route): step 1/1. The polypeptide is Aerobic glycerol-3-phosphate dehydrogenase (glpD) (Staphylococcus saprophyticus subsp. saprophyticus (strain ATCC 15305 / DSM 20229 / NCIMB 8711 / NCTC 7292 / S-41)).